An 831-amino-acid polypeptide reads, in one-letter code: Periplasmic nitrate reductase (831 aa).

Positions 1 to 29 (MTLTRRDLIKAQAAATAAAAAGLPVSALA) form a signal peptide, tat-type signal. A 4Fe-4S Mo/W bis-MGD-type domain is found at 41-97 (IRWSKAPCRFCGTGCGVMVGTRDGQVVATHGDTQAEVNRGLNCVKGYFLSKIMYGED). C48, C51, C55, and C83 together coordinate [4Fe-4S] cluster. Residues K85, Q152, N177, C181, 214-221 (WGSNMAEM), 245-249 (STFTH), 264-266 (GTD), M375, Q379, N485, 511-512 (SD), K534, D561, and 721-730 (TGRVLEHWHS) each bind Mo-bis(molybdopterin guanine dinucleotide). W797 serves as a coordination point for substrate. Positions 805 and 822 each coordinate Mo-bis(molybdopterin guanine dinucleotide).

Belongs to the prokaryotic molybdopterin-containing oxidoreductase family. NasA/NapA/NarB subfamily. In terms of assembly, component of the periplasmic nitrate reductase NapAB complex composed of NapA and NapB. [4Fe-4S] cluster is required as a cofactor. Mo-bis(molybdopterin guanine dinucleotide) serves as cofactor. Predicted to be exported by the Tat system. The position of the signal peptide cleavage has not been experimentally proven.

The protein resides in the periplasm. The catalysed reaction is 2 Fe(II)-[cytochrome] + nitrate + 2 H(+) = 2 Fe(III)-[cytochrome] + nitrite + H2O. Catalytic subunit of the periplasmic nitrate reductase complex NapAB. Receives electrons from NapB and catalyzes the reduction of nitrate to nitrite. The protein is Periplasmic nitrate reductase of Cereibacter sphaeroides (strain ATCC 17023 / DSM 158 / JCM 6121 / CCUG 31486 / LMG 2827 / NBRC 12203 / NCIMB 8253 / ATH 2.4.1.) (Rhodobacter sphaeroides).